The chain runs to 272 residues: Alcohol dehydrogenase-related 31 kDa protein (272 aa).

An NAD(+)-binding site is contributed by 11 to 34; sequence YVADCGGIALETSKVLMTKNIAKL. Residue serine 139 coordinates substrate. Catalysis depends on tyrosine 152, which acts as the Proton acceptor.

The protein belongs to the short-chain dehydrogenases/reductases (SDR) family.

This Drosophila mauritiana (Fruit fly) protein is Alcohol dehydrogenase-related 31 kDa protein (Adhr).